The following is a 341-amino-acid chain: MKKDIIILGIESSCDDTSAAVVRNETMLSNVIAGQAVHKAYGGVVPELASRAHQQNIVPVVSEAIKRAGIRKEEIDAIAFTRGPGLLGSLLVGTSFAKGLSLSLGIPMLEVNHLHAHVLANFLREPGEESQHPSFPFLCLLVSGGNSQIILVRSPYDMEVIGQTIDDAAGEAFDKCAKVMGLGYPGGPIVNKLASEGNPDAFRFARPHVSGYDYSFSGLKTSFLYTLRDKLAEDPDFIEKNKADLCASLQHTVIDILMKKLRQAAKDHSIKQVALAGGVSANTGLRDAFHDHARRYGWTVFIPKFAYTTDNAAMVAISGYYKYLQGDFCPIDAVPFSRITV.

Residues histidine 113 and histidine 117 each contribute to the Fe cation site. Substrate is bound by residues 141-145 (LVSGG), aspartate 174, glycine 187, and asparagine 282. Position 310 (aspartate 310) interacts with Fe cation.

Belongs to the KAE1 / TsaD family. Requires Fe(2+) as cofactor.

It localises to the cytoplasm. It carries out the reaction L-threonylcarbamoyladenylate + adenosine(37) in tRNA = N(6)-L-threonylcarbamoyladenosine(37) in tRNA + AMP + H(+). Required for the formation of a threonylcarbamoyl group on adenosine at position 37 (t(6)A37) in tRNAs that read codons beginning with adenine. Is involved in the transfer of the threonylcarbamoyl moiety of threonylcarbamoyl-AMP (TC-AMP) to the N6 group of A37, together with TsaE and TsaB. TsaD likely plays a direct catalytic role in this reaction. The sequence is that of tRNA N6-adenosine threonylcarbamoyltransferase from Porphyromonas gingivalis (strain ATCC BAA-308 / W83).